Reading from the N-terminus, the 132-residue chain is ATP synthase epsilon chain (132 aa).

Residues 88-102 (IDKERAEAARQRAQE) are compositionally biased toward basic and acidic residues. Residues 88–112 (IDKERAEAARQRAQERLNSQSDDTD) are disordered.

This sequence belongs to the ATPase epsilon chain family. F-type ATPases have 2 components, CF(1) - the catalytic core - and CF(0) - the membrane proton channel. CF(1) has five subunits: alpha(3), beta(3), gamma(1), delta(1), epsilon(1). CF(0) has three main subunits: a, b and c. The F(1)F(0) complex interacts with SpoIIIJ and YqjG; YqgA is found in the same complex.

It is found in the cell membrane. Functionally, produces ATP from ADP in the presence of a proton gradient across the membrane. The protein is ATP synthase epsilon chain (atpC) of Bacillus subtilis (strain 168).